Reading from the N-terminus, the 256-residue chain is 2,3,4,5-tetrahydropyridine-2,6-dicarboxylate N-acetyltransferase (256 aa).

It belongs to the transferase hexapeptide repeat family. DapH subfamily.

The enzyme catalyses (S)-2,3,4,5-tetrahydrodipicolinate + acetyl-CoA + H2O = L-2-acetamido-6-oxoheptanedioate + CoA. The protein operates within amino-acid biosynthesis; L-lysine biosynthesis via DAP pathway; LL-2,6-diaminopimelate from (S)-tetrahydrodipicolinate (acetylase route): step 1/3. Catalyzes the transfer of an acetyl group from acetyl-CoA to tetrahydrodipicolinate. This is 2,3,4,5-tetrahydropyridine-2,6-dicarboxylate N-acetyltransferase from Lactococcus lactis subsp. cremoris (strain MG1363).